Consider the following 279-residue polypeptide: Putative short-chain type dehydrogenase/reductase MSMEG_6031/MSMEI_5872 (279 aa).

Position 11 to 33 (11 to 33 (FITGAARGQGRSHAVRLAEEGAD)) interacts with NAD(+). An Isoglutamyl lysine isopeptide (Lys-Gln) (interchain with Q-Cter in protein Pup) cross-link involves residue Lys-65. Residue Ser-158 coordinates substrate. Tyr-171 serves as the catalytic Proton acceptor.

The protein belongs to the short-chain dehydrogenases/reductases (SDR) family.

This chain is Putative short-chain type dehydrogenase/reductase MSMEG_6031/MSMEI_5872, found in Mycolicibacterium smegmatis (strain ATCC 700084 / mc(2)155) (Mycobacterium smegmatis).